The sequence spans 809 residues: TPR repeat-containing protein TP_0920 (809 aa).

A disordered region spans residues proline 103–serine 125. 9 TPR repeats span residues leucine 315 to cysteine 348, alanine 383 to glutamine 416, leucine 418 to glutamine 450, threonine 471 to aspartate 504, leucine 513 to cysteine 550, leucine 552 to asparagine 582, glycine 583 to glutamate 616, glycine 656 to asparagine 689, and alanine 723 to cysteine 756.

The chain is TPR repeat-containing protein TP_0920 from Treponema pallidum (strain Nichols).